The chain runs to 119 residues: Immunoglobulin heavy variable 2-70 (119 aa).

The first 19 residues, 1–19 (MDILCSTLLLLTVPSWVLS), serve as a signal peptide directing secretion. Pyrrolidone carboxylic acid is present on Q20. Residues 20 to 44 (QVTLRESGPALVKPTQTLTLTCTFS) are framework-1. One can recognise an Ig-like domain in the interval 20-119 (QVTLRESGPA…DTATYYCARI (100 aa)). An intrachain disulfide couples C41 to C116. The complementarity-determining-1 stretch occupies residues 45 to 54 (GFSLSTSGMC). Residues 55–71 (VSWIRQPPGKALEWLAL) are framework-2. Residues 72 to 78 (IDWDDDK) are complementarity-determining-2. The interval 79 to 116 (YYSTSLKTRLTISKDTSKNQVVLTMTNMDPVDTATYYC) is framework-3. The segment at 117 to 119 (ARI) is complementarity-determining-3.

Immunoglobulins are composed of two identical heavy chains and two identical light chains; disulfide-linked.

It localises to the secreted. The protein resides in the cell membrane. Its function is as follows. V region of the variable domain of immunoglobulin heavy chains that participates in the antigen recognition. Immunoglobulins, also known as antibodies, are membrane-bound or secreted glycoproteins produced by B lymphocytes. In the recognition phase of humoral immunity, the membrane-bound immunoglobulins serve as receptors which, upon binding of a specific antigen, trigger the clonal expansion and differentiation of B lymphocytes into immunoglobulins-secreting plasma cells. Secreted immunoglobulins mediate the effector phase of humoral immunity, which results in the elimination of bound antigens. The antigen binding site is formed by the variable domain of one heavy chain, together with that of its associated light chain. Thus, each immunoglobulin has two antigen binding sites with remarkable affinity for a particular antigen. The variable domains are assembled by a process called V-(D)-J rearrangement and can then be subjected to somatic hypermutations which, after exposure to antigen and selection, allow affinity maturation for a particular antigen. This is Immunoglobulin heavy variable 2-70 from Homo sapiens (Human).